Here is an 85-residue protein sequence, read N- to C-terminus: Large ribosomal subunit protein bL27 (85 aa).

Residues 1–21 (MAHKKGGGTTRNGRDSESKRL) are disordered.

This sequence belongs to the bacterial ribosomal protein bL27 family.

This is Large ribosomal subunit protein bL27 from Janthinobacterium sp. (strain Marseille) (Minibacterium massiliensis).